Reading from the N-terminus, the 265-residue chain is Transcription factor LBX1 (265 aa).

A compositionally biased stretch (basic and acidic residues) spans 1–20; that stretch reads MTSKDEAKSSSVEERRRHAL. The disordered stretch occupies residues 1-33; sequence MTSKDEAKSSSVEERRRHALDLLPPPANSNKPL. Residues 125–184 constitute a DNA-binding region (homeobox); sequence RRKSRTAFTNHQIYELEKRFLYQKYLSPADRDQIAQQLGLTNAQVITWFQNRRAKLKRDL. The tract at residues 212–265 is disordered; it reads EEETNSVRDDSRSRSPQLGLSGHMPLSPSSPLTEQHTSKECSEDEEDVEIDVDD. The segment covering 253 to 265 has biased composition (acidic residues); that stretch reads SEDEEDVEIDVDD.

The protein localises to the nucleus. Functionally, transcription factor that controls hypaxial muscle development by down-regulating myod1 and cdkn1b/p27, thereby allowing myoblasts to proliferate before the onset of terminal differentiation. This is Transcription factor LBX1 from Xenopus tropicalis (Western clawed frog).